Reading from the N-terminus, the 236-residue chain is Leucyl/phenylalanyl-tRNA--protein transferase (236 aa).

Belongs to the L/F-transferase family.

Its subcellular location is the cytoplasm. The catalysed reaction is N-terminal L-lysyl-[protein] + L-leucyl-tRNA(Leu) = N-terminal L-leucyl-L-lysyl-[protein] + tRNA(Leu) + H(+). The enzyme catalyses N-terminal L-arginyl-[protein] + L-leucyl-tRNA(Leu) = N-terminal L-leucyl-L-arginyl-[protein] + tRNA(Leu) + H(+). It catalyses the reaction L-phenylalanyl-tRNA(Phe) + an N-terminal L-alpha-aminoacyl-[protein] = an N-terminal L-phenylalanyl-L-alpha-aminoacyl-[protein] + tRNA(Phe). Functions in the N-end rule pathway of protein degradation where it conjugates Leu, Phe and, less efficiently, Met from aminoacyl-tRNAs to the N-termini of proteins containing an N-terminal arginine or lysine. The chain is Leucyl/phenylalanyl-tRNA--protein transferase from Shewanella woodyi (strain ATCC 51908 / MS32).